The chain runs to 216 residues: Kynurenine formamidase (216 aa).

A substrate-binding site is contributed by Trp-25. Positions 55, 59, and 61 each coordinate Zn(2+). His-65 functions as the Proton donor/acceptor in the catalytic mechanism. Positions 167 and 179 each coordinate Zn(2+).

It belongs to the Cyclase 1 superfamily. KynB family. In terms of assembly, homodimer. Zn(2+) serves as cofactor.

It catalyses the reaction N-formyl-L-kynurenine + H2O = L-kynurenine + formate + H(+). Its pathway is amino-acid degradation; L-tryptophan degradation via kynurenine pathway; L-kynurenine from L-tryptophan: step 2/2. In terms of biological role, catalyzes the hydrolysis of N-formyl-L-kynurenine to L-kynurenine, the second step in the kynurenine pathway of tryptophan degradation. The sequence is that of Kynurenine formamidase from Cupriavidus taiwanensis (strain DSM 17343 / BCRC 17206 / CCUG 44338 / CIP 107171 / LMG 19424 / R1) (Ralstonia taiwanensis (strain LMG 19424)).